The following is a 256-amino-acid chain: Large ribosomal subunit protein bL28m (256 aa).

The transit peptide at methionine 1–lysine 55 directs the protein to the mitochondrion.

This sequence belongs to the bacterial ribosomal protein bL28 family. In terms of assembly, component of the mitochondrial large ribosomal subunit (mt-LSU). Mature mammalian 55S mitochondrial ribosomes consist of a small (28S) and a large (39S) subunit. The 28S small subunit contains a 12S ribosomal RNA (12S mt-rRNA) and 30 different proteins. The 39S large subunit contains a 16S rRNA (16S mt-rRNA), a copy of mitochondrial valine transfer RNA (mt-tRNA(Val)), which plays an integral structural role, and 52 different proteins. Interacts with OXA1L. As to expression, found in a variety of normal tissues including spleen, testes, thymus, liver, kidney, brain, adrenal, lung and retinal tissue.

The protein resides in the mitochondrion. The protein is Large ribosomal subunit protein bL28m (MRPL28) of Homo sapiens (Human).